The chain runs to 376 residues: UDP-N-acetylglucosamine--N-acetylmuramyl-(pentapeptide) pyrophosphoryl-undecaprenol N-acetylglucosamine transferase (376 aa).

UDP-N-acetyl-alpha-D-glucosamine is bound by residues 14 to 16 (TGG), Asn-128, Arg-169, Ser-201, Ile-256, and Gln-301.

Belongs to the glycosyltransferase 28 family. MurG subfamily.

The protein resides in the cell inner membrane. The catalysed reaction is di-trans,octa-cis-undecaprenyl diphospho-N-acetyl-alpha-D-muramoyl-L-alanyl-D-glutamyl-meso-2,6-diaminopimeloyl-D-alanyl-D-alanine + UDP-N-acetyl-alpha-D-glucosamine = di-trans,octa-cis-undecaprenyl diphospho-[N-acetyl-alpha-D-glucosaminyl-(1-&gt;4)]-N-acetyl-alpha-D-muramoyl-L-alanyl-D-glutamyl-meso-2,6-diaminopimeloyl-D-alanyl-D-alanine + UDP + H(+). The protein operates within cell wall biogenesis; peptidoglycan biosynthesis. Cell wall formation. Catalyzes the transfer of a GlcNAc subunit on undecaprenyl-pyrophosphoryl-MurNAc-pentapeptide (lipid intermediate I) to form undecaprenyl-pyrophosphoryl-MurNAc-(pentapeptide)GlcNAc (lipid intermediate II). The chain is UDP-N-acetylglucosamine--N-acetylmuramyl-(pentapeptide) pyrophosphoryl-undecaprenol N-acetylglucosamine transferase from Phocaeicola vulgatus (strain ATCC 8482 / DSM 1447 / JCM 5826 / CCUG 4940 / NBRC 14291 / NCTC 11154) (Bacteroides vulgatus).